A 317-amino-acid polypeptide reads, in one-letter code: Insulin-like growth factor-binding protein 2 (317 aa).

The first 33 residues, 1 to 33, serve as a signal peptide directing secretion; the sequence is MQPRLGGPALLLLPPLLLLLLLGAGGGDCGARA. The 92-residue stretch at 35–126 folds into the IGFBP N-terminal domain; that stretch reads VLFRCPPCTP…VHGEGTCEKH (92 aa). Cystine bridges form between C39–C76, C42–C78, C50–C79, C68–C82, C90–C103, and C97–C123. Disordered stretches follow at residues 125–151 and 189–218; these read KHGD…GGQV and EQHR…ARTP. Positions 216-298 constitute a Thyroglobulin type-1 domain; that stretch reads RTPCQQELDQ…APTIRGDPEC (83 aa). Disulfide bonds link C219-C253, C264-C275, and C277-C298. A Cell attachment site motif is present at residues 293–295; that stretch reads RGD.

Interacts with IGF1. Interacts with IGF2. Interacts (via RGD motif) with integrin alpha5/ITGA5; this interaction induces cell migration, adhesion or apoptosis according to the context. Interacts with PTPRB; this interaction leads to PTPRB dimerization and inactivation. Cleaved by MMP9 leading to release of free IGF2 from IGFBP2-IGF2 complex, which contributes to enhance the motility and the growth of astrocytes. In terms of processing, O-glycosylated. In terms of tissue distribution, expressed in abundance in selected adult tissues, namely liver, kidney, adrenal, pituitary and choroid plexus.

It localises to the secreted. In terms of biological role, multifunctional protein that plays a critical role in regulating the availability of IGFs such as IGF1 and IGF2 to their receptors and thereby regulates IGF-mediated cellular processes including proliferation, differentiation, and apoptosis in a cell-type specific manner. Functions coordinately with receptor protein tyrosine phosphatase beta/PTPRB and the IGF1 receptor to regulate IGF1-mediated signaling by stimulating the phosphorylation of PTEN leading to its inactivation and AKT1 activation. Plays a positive role in cell migration via interaction with integrin alpha5/ITGA5 through an RGD motif. Additionally, interaction with ITGA5/ITGB1 enhances the adhesion of endothelial progenitor cells to endothelial cells. Upon mitochondrial damage, facilitates apoptosis with ITGA5 of podocytes, and then activates the phosphorylation of focal adhesion kinase (FAK)-mediated mitochondrial injury. This is Insulin-like growth factor-binding protein 2 (IGFBP2) from Ovis aries (Sheep).